The primary structure comprises 229 residues: Potassium/proton antiporter CemA (229 aa).

3 helical membrane-spanning segments follow: residues 7-27 (FTPLLYLVSIVFLPWWISLLF), 107-127 (ILHFSTNIICFIILSGYSILG), and 189-209 (IISGLVSTFPVILDTILKYWI).

This sequence belongs to the CemA family.

It localises to the plastid. It is found in the chloroplast inner membrane. The enzyme catalyses K(+)(in) + H(+)(out) = K(+)(out) + H(+)(in). In terms of biological role, contributes to K(+)/H(+) antiport activity by supporting proton efflux to control proton extrusion and homeostasis in chloroplasts in a light-dependent manner to modulate photosynthesis. Prevents excessive induction of non-photochemical quenching (NPQ) under continuous-light conditions. Indirectly promotes efficient inorganic carbon uptake into chloroplasts. The chain is Potassium/proton antiporter CemA from Helianthus annuus (Common sunflower).